A 119-amino-acid chain; its full sequence is Large ribosomal subunit protein bL20 (119 aa).

It belongs to the bacterial ribosomal protein bL20 family.

Its function is as follows. Binds directly to 23S ribosomal RNA and is necessary for the in vitro assembly process of the 50S ribosomal subunit. It is not involved in the protein synthesizing functions of that subunit. In Alkaliphilus oremlandii (strain OhILAs) (Clostridium oremlandii (strain OhILAs)), this protein is Large ribosomal subunit protein bL20.